A 564-amino-acid polypeptide reads, in one-letter code: MESLALLPTLSLSTTTTTSKATAFLRSSTTSLHHRRPHLSLSLSSTPKPTLTFSSHSHSHSLSSKPLLALKPLNATASSSSSPATTSPPPTKSGAKLIPLILSVSVGLLLRFAVPKPAELTPQAWQLLAIFLSTVAGLVLSPLPVGAWAFLGVTASVVTKTLPFPTAFCAFTNEVIWLIVISFFFARGFVKTGLGDRIATYFVKWLGKSTLGLSYGLTISEALVAPAMPSTTARAGGIFLPIIKSLSISSGSLPGGESRKKLGTYLIMTQFQSAGNSSALFLTAAAQNLLCLKLAEELGVKIASPWVFWLKAASLPAFVALLLTPLILYKLYPPELKDTPEAPALAAEKLKNMGPVTKNEWVMVGTMLLAVSLWVFGEKIGVSSVVAAMLGLSVLLLLGVLDWNDCLNEKSAWDTLAWFAVLVGMASQLTNLGIVSWMSGCVARSLKTMNLSWPAAFGILQAAYFFVHYLFASQTGHVGALYSAFLAMNIASGVPGVLAALALAYNTNLFGALTHYSSGQAAVYYGAGYVDLPDVFKMGFIMAVINATIWTVVGGVWWKILGIY.

The N-terminal 22 residues, 1–22, are a transit peptide targeting the chloroplast; the sequence is MESLALLPTLSLSTTTTTSKAT. A disordered region spans residues 35–58; that stretch reads RRPHLSLSLSSTPKPTLTFSSHSH. Residues 39 to 58 are compositionally biased toward low complexity; that stretch reads LSLSLSSTPKPTLTFSSHSH. The next 12 helical transmembrane spans lie at 94 to 114, 127 to 147, 166 to 186, 235 to 255, 262 to 282, 307 to 327, 356 to 376, 380 to 400, 415 to 435, 451 to 471, 484 to 504, and 538 to 558; these read GAKLIPLILSVSVGLLLRFAV, LLAIFLSTVAGLVLSPLPVGA, TAFCAFTNEVIWLIVISFFFA, AGGIFLPIIKSLSISSGSLPG, LGTYLIMTQFQSAGNSSALFL, VFWLKAASLPAFVALLLTPLI, VTKNEWVMVGTMLLAVSLWVF, IGVSSVVAAMLGLSVLLLLGV, TLAWFAVLVGMASQLTNLGIV, LSWPAAFGILQAAYFFVHYLF, AFLAMNIASGVPGVLAALALA, and MGFIMAVINATIWTVVGGVWW.

The protein belongs to the SLC13A/DASS transporter (TC 2.A.47) family. DIT1 subfamily. As to expression, expressed in leaves.

Its subcellular location is the plastid. The protein localises to the chloroplast inner membrane. Glutamate/malate translocator involved with DIT1 in primary ammonia assimilation and in the re-assimilation of ammonia generated by the photorespiratory pathway. Exports the end product of ammonia assimilation, glutamate, from plastids to the cytosol. The precursor for ammonia assimilation, 2-oxoglutarate, is imported from the cytosol by DIT1. The polypeptide is Dicarboxylate transporter 2, chloroplastic (DIT2) (Spinacia oleracea (Spinach)).